The primary structure comprises 146 residues: MKSENTAFKKTAEGIYEFLDNPLQLTSEKFKSEIEPLLKNPEVKYVLIDSREDYNHQGDKIIRNNLRLVKSWYKNTLEDASLTEKEIYKLVWLPKEKVMDDLMNQGSFWPEEWLFSMKSYYNIPHISLLKKSLDTVKSDKNQNKFQ.

This is an uncharacterized protein from Acanthamoeba polyphaga mimivirus (APMV).